Consider the following 260-residue polypeptide: Thiazole synthase (260 aa).

Lys96 (schiff-base intermediate with DXP) is an active-site residue. 1-deoxy-D-xylulose 5-phosphate is bound by residues Gly157, 183–184, and 205–206; these read AG and AS.

This sequence belongs to the ThiG family. In terms of assembly, homotetramer. Forms heterodimers with either ThiH or ThiS.

Its subcellular location is the cytoplasm. The catalysed reaction is [ThiS sulfur-carrier protein]-C-terminal-Gly-aminoethanethioate + 2-iminoacetate + 1-deoxy-D-xylulose 5-phosphate = [ThiS sulfur-carrier protein]-C-terminal Gly-Gly + 2-[(2R,5Z)-2-carboxy-4-methylthiazol-5(2H)-ylidene]ethyl phosphate + 2 H2O + H(+). It participates in cofactor biosynthesis; thiamine diphosphate biosynthesis. In terms of biological role, catalyzes the rearrangement of 1-deoxy-D-xylulose 5-phosphate (DXP) to produce the thiazole phosphate moiety of thiamine. Sulfur is provided by the thiocarboxylate moiety of the carrier protein ThiS. In vitro, sulfur can be provided by H(2)S. The chain is Thiazole synthase from Corynebacterium glutamicum (strain ATCC 13032 / DSM 20300 / JCM 1318 / BCRC 11384 / CCUG 27702 / LMG 3730 / NBRC 12168 / NCIMB 10025 / NRRL B-2784 / 534).